We begin with the raw amino-acid sequence, 410 residues long: Lissencephaly-1 homolog (410 aa).

The LisH domain maps to Q7–D39. Residues T55–A80 are a coiled coil. WD repeat units follow at residues G104–S143, G146–T185, G188–T227, G230–V269, M294–R333, G336–T375, and A378–N410.

It belongs to the WD repeat LIS1/nudF family.

The protein localises to the cytoplasm. It localises to the cytoskeleton. Its subcellular location is the microtubule organizing center. The protein resides in the centrosome. In terms of biological role, positively regulates the activity of the minus-end directed microtubule motor protein dynein. May enhance dynein-mediated microtubule sliding by targeting dynein to the microtubule plus end. Required for several dynein- and microtubule-dependent processes. The protein is Lissencephaly-1 homolog of Monosiga brevicollis (Choanoflagellate).